Consider the following 125-residue polypeptide: Small ribosomal subunit protein uS12 (125 aa).

Aspartate 89 is modified (3-methylthioaspartic acid).

It belongs to the universal ribosomal protein uS12 family. Part of the 30S ribosomal subunit. Contacts proteins S8 and S17. May interact with IF1 in the 30S initiation complex.

With S4 and S5 plays an important role in translational accuracy. In terms of biological role, interacts with and stabilizes bases of the 16S rRNA that are involved in tRNA selection in the A site and with the mRNA backbone. Located at the interface of the 30S and 50S subunits, it traverses the body of the 30S subunit contacting proteins on the other side and probably holding the rRNA structure together. The combined cluster of proteins S8, S12 and S17 appears to hold together the shoulder and platform of the 30S subunit. This is Small ribosomal subunit protein uS12 from Cupriavidus pinatubonensis (strain JMP 134 / LMG 1197) (Cupriavidus necator (strain JMP 134)).